A 240-amino-acid polypeptide reads, in one-letter code: UDP-2,3-diacylglucosamine hydrolase (240 aa).

Mn(2+) is bound by residues Asp8, His10, Asp41, Asn79, and His114. Residue 79-80 coordinates substrate; the sequence is NR. Residues Asp122, Ser160, Asn164, Lys167, and His195 each coordinate substrate. Positions 195 and 197 each coordinate Mn(2+).

This sequence belongs to the LpxH family. It depends on Mn(2+) as a cofactor.

It is found in the cell inner membrane. It catalyses the reaction UDP-2-N,3-O-bis[(3R)-3-hydroxytetradecanoyl]-alpha-D-glucosamine + H2O = 2-N,3-O-bis[(3R)-3-hydroxytetradecanoyl]-alpha-D-glucosaminyl 1-phosphate + UMP + 2 H(+). Its pathway is glycolipid biosynthesis; lipid IV(A) biosynthesis; lipid IV(A) from (3R)-3-hydroxytetradecanoyl-[acyl-carrier-protein] and UDP-N-acetyl-alpha-D-glucosamine: step 4/6. Functionally, hydrolyzes the pyrophosphate bond of UDP-2,3-diacylglucosamine to yield 2,3-diacylglucosamine 1-phosphate (lipid X) and UMP by catalyzing the attack of water at the alpha-P atom. Involved in the biosynthesis of lipid A, a phosphorylated glycolipid that anchors the lipopolysaccharide to the outer membrane of the cell. The chain is UDP-2,3-diacylglucosamine hydrolase from Klebsiella pneumoniae subsp. pneumoniae (strain ATCC 700721 / MGH 78578).